We begin with the raw amino-acid sequence, 987 residues long: Rho GTPase-activating protein 6 (987 aa).

A compositionally biased stretch (polar residues) spans 1-21 (MSAQSLLHSVFSCSSPASGGT). Disordered regions lie at residues 1–60 (MSAQ…RGST), 76–117 (SRLA…SGSF), and 144–170 (GSGS…IFSS). Position 37 is a phosphoserine (Ser-37). A compositionally biased stretch (gly residues) spans 44 to 57 (GGCGSEMGAEGGLR). Polar residues predominate over residues 100–115 (SSFSTPSTPQEKSPSG). Over residues 144-159 (GSGSASSRSPASILSS) the composition is skewed to low complexity. Ser-265 bears the Phosphoserine mark. The segment at 324 to 363 (KQNKELSSSNSSLSSTSETPNESTSPNTPEPAPRARRRGA) is disordered. Positions 328–350 (ELSSSNSSLSSTSETPNESTSPN) are enriched in low complexity. An SH3-binding motif is present at residues 344–354 (NESTSPNTPEP). Ser-365 carries the phosphoserine modification. The region spanning 403–604 (LSLNPIYRQV…KMIENYEALF (202 aa)) is the Rho-GAP domain. Residues 641-676 (DILQTEVSFSMGGRHSSTDSNKASSGDISPYDNNSP) form a disordered region. The segment covering 658 to 676 (TDSNKASSGDISPYDNNSP) has biased composition (polar residues). Phosphoserine occurs at positions 669, 675, 682, 713, 758, 776, 781, 790, and 824. The tract at residues 709 to 731 (GHLSSPKSKSRESSPGPRLGKEM) is disordered. 2 disordered regions span residues 825–847 (TPHI…PFLS) and 863–953 (WLQS…QDKQ). Over residues 939-948 (LSSAYSLSAS) the composition is skewed to low complexity. Phosphoserine occurs at positions 941 and 944.

Expressed in retina and lung.

Its subcellular location is the cytoplasm. Its function is as follows. GTPase activator for the Rho-type GTPases by converting them to an inactive GDP-bound state. Could regulate the interactions of signaling molecules with the actin cytoskeleton. Promotes continuous elongation of cytoplasmic processes during cell motility and simultaneous retraction of the cell body changing the cell morphology. The protein is Rho GTPase-activating protein 6 (Arhgap6) of Mus musculus (Mouse).